Reading from the N-terminus, the 134-residue chain is Mini-ribonuclease 3 (134 aa).

Asp22 is a catalytic residue.

It belongs to the MrnC RNase family. As to quaternary structure, homodimer. It depends on Mg(2+) as a cofactor.

The protein resides in the cytoplasm. Involved in correct processing of both the 5' and 3' ends of 23S rRNA precursor. Processes 30S rRNA precursor transcript even in absence of ribonuclease 3 (Rnc); Rnc processes 30S rRNA into smaller rRNA precursors. This is Mini-ribonuclease 3 from Staphylococcus aureus (strain NCTC 8325 / PS 47).